The primary structure comprises 154 residues: Transcriptional repressor NrdR (154 aa).

A zinc finger lies at 3-34 (CPFCNAPDTKVIDSRLATEGAQVRRRRECMSC). The ATP-cone domain occupies 49 to 139 (PRVIKSDGNR…VYRSFQDVNA (91 aa)).

Belongs to the NrdR family. Requires Zn(2+) as cofactor.

Negatively regulates transcription of bacterial ribonucleotide reductase nrd genes and operons by binding to NrdR-boxes. The chain is Transcriptional repressor NrdR from Hydrogenovibrio crunogenus (strain DSM 25203 / XCL-2) (Thiomicrospira crunogena).